The primary structure comprises 437 residues: F-box/FBD/LRR-repeat protein At5g22700 (437 aa).

The F-box domain maps to 5–51 (GDRISSLPDELLCQILSNLPTKNAVTTSILSTRWRSIWLSTPVLDID). LRR repeat units follow at residues 86–113 (RDDVDMCTIMPWIQDAVNRRIQHLEVDC), 134–160 (SLRLHFVTLHRYEFVSLPNLKVMHLEE), 161–186 (NIYYCLETLENFISSCPVLEDLTVVR), 187–210 (IVDIITEKILRVRSRSLNSLKLVL), 215–240 (GWFIDDIDEWKVIIDAPRLAYLSLKD), 272–297 (PVTFERSNVGKLLTGLSSIRDLTISG), and 322–350 (NARFYDCDLEMLPCVLESCPNLKSLVLGL). The 46-residue stretch at 361-406 (RVSSVPPCFLSSLEFVEIRSRLCRKRYVMKVARYFAKNSVMLKKFV) folds into the FBD domain.

The polypeptide is F-box/FBD/LRR-repeat protein At5g22700 (Arabidopsis thaliana (Mouse-ear cress)).